A 603-amino-acid polypeptide reads, in one-letter code: Elongation factor 4 (603 aa).

One can recognise a tr-type G domain in the interval 6-188 (AHIRNFCIIA…SVVQNVPPPS (183 aa)). GTP is bound by residues 18–23 (DHGKST) and 135–138 (NKID).

This sequence belongs to the TRAFAC class translation factor GTPase superfamily. Classic translation factor GTPase family. LepA subfamily.

The protein localises to the cell inner membrane. The enzyme catalyses GTP + H2O = GDP + phosphate + H(+). In terms of biological role, required for accurate and efficient protein synthesis under certain stress conditions. May act as a fidelity factor of the translation reaction, by catalyzing a one-codon backward translocation of tRNAs on improperly translocated ribosomes. Back-translocation proceeds from a post-translocation (POST) complex to a pre-translocation (PRE) complex, thus giving elongation factor G a second chance to translocate the tRNAs correctly. Binds to ribosomes in a GTP-dependent manner. The protein is Elongation factor 4 of Myxococcus xanthus (strain DK1622).